Consider the following 245-residue polypeptide: Putative MSV199 domain-containing protein 146R (245 aa).

The GIY-YIG domain occupies 2 to 97 (RKGYIYVIEN…NTLHGKLKNL (96 aa)).

In Acheta domesticus (House cricket), this protein is Putative MSV199 domain-containing protein 146R.